The chain runs to 383 residues: Succinyl-diaminopimelate desuccinylase (383 aa).

Zn(2+) is bound at residue His-73. The active site involves Asp-75. Position 107 (Asp-107) interacts with Zn(2+). Residue Glu-141 is the Proton acceptor of the active site. Residues Glu-142, Glu-170, and His-356 each contribute to the Zn(2+) site.

The protein belongs to the peptidase M20A family. DapE subfamily. As to quaternary structure, homodimer. Zn(2+) is required as a cofactor. It depends on Co(2+) as a cofactor.

The enzyme catalyses N-succinyl-(2S,6S)-2,6-diaminopimelate + H2O = (2S,6S)-2,6-diaminopimelate + succinate. It functions in the pathway amino-acid biosynthesis; L-lysine biosynthesis via DAP pathway; LL-2,6-diaminopimelate from (S)-tetrahydrodipicolinate (succinylase route): step 3/3. Functionally, catalyzes the hydrolysis of N-succinyl-L,L-diaminopimelic acid (SDAP), forming succinate and LL-2,6-diaminopimelate (DAP), an intermediate involved in the bacterial biosynthesis of lysine and meso-diaminopimelic acid, an essential component of bacterial cell walls. The polypeptide is Succinyl-diaminopimelate desuccinylase (Pseudomonas putida (strain W619)).